Consider the following 370-residue polypeptide: Phosphate-binding protein PstS 2 (370 aa).

The signal sequence occupies residues 1 to 22 (MKFARSGAAVSLLAAGTLVLTA). The N-palmitoyl cysteine moiety is linked to residue Cys-23. Cys-23 carries the S-diacylglycerol cysteine lipid modification. Phosphate is bound by residues 54-56 (STA), Ser-84, Asp-102, and 191-193 (SGT).

Belongs to the PstS family. As to quaternary structure, the complex is composed of two ATP-binding proteins (PstB), two transmembrane proteins (PstC and PstA) and a solute-binding protein (PstS).

The protein localises to the cell membrane. Functions in inorganic phosphate uptake, although probably not the main uptake protein under phosphate starvation. Part of the ABC transporter complex PstSACB involved in phosphate import. The sequence is that of Phosphate-binding protein PstS 2 (pstS2) from Mycobacterium tuberculosis (strain ATCC 25618 / H37Rv).